The primary structure comprises 114 residues: Aspartate 1-decarboxylase (114 aa).

Residue Ser25 is the Schiff-base intermediate with substrate; via pyruvic acid of the active site. Pyruvic acid (Ser) is present on Ser25. Thr57 contacts substrate. Catalysis depends on Tyr58, which acts as the Proton donor. Gly71–Ala73 lines the substrate pocket.

Belongs to the PanD family. As to quaternary structure, heterooctamer of four alpha and four beta subunits. It depends on pyruvate as a cofactor. Is synthesized initially as an inactive proenzyme, which is activated by self-cleavage at a specific serine bond to produce a beta-subunit with a hydroxyl group at its C-terminus and an alpha-subunit with a pyruvoyl group at its N-terminus.

Its subcellular location is the cytoplasm. The enzyme catalyses L-aspartate + H(+) = beta-alanine + CO2. The protein operates within cofactor biosynthesis; (R)-pantothenate biosynthesis; beta-alanine from L-aspartate: step 1/1. Its function is as follows. Catalyzes the pyruvoyl-dependent decarboxylation of aspartate to produce beta-alanine. The polypeptide is Aspartate 1-decarboxylase (Haloquadratum walsbyi (strain DSM 16790 / HBSQ001)).